The chain runs to 796 residues: MANQVSNVINSMRLKRLQKQLVAVNRLSDQMRNCSDEALQAKTADFKQRLEKRETTLDKLLPEAYATIREASKRVLGMYPKDVQVMGAIVMHQGNIAEMQTGEGKTLTATMPLYLNALTGKSAFLITTNDYLANRDFQEMRPLYEWLGLTASLGFVDIPDYEYAENEKQMLYNHDIIYTTNGRLGFDYLFDNLADHINAKYLPELNFAIIDEVDSIILDAAQTPLVISGAPRVQSNLFHIIKMFVETLVEDEHFKLNVNKKEVWLTDEGIDVANHYFKVNNIYLPQYFDLVRVINLSLRAKYLFKDNLDYFIYNGEVVLIDRITGRMLPGTKLQSGLHQAIEAKEGVELSQDLSVMATITFQNLFKLFNGFSGMTGTGKLGEKEFFDLYSKLVVEIPTNHPIIRNDKEDRVYAKSDEKNKAILEKVKEIHATKQPVLLITRTAEAAEYFSTQLFKDNIPNNLLIAQNVAKEAQMIAEAGQLGAVTVSTSMAGRGTDIKLGSGVYELGGLAVIINEHMENSRVDRQLRGRSGRQGDPGVSQIYVSLDDYIVKRWSNSKLAENKKLKDVDPDKLQDSPFFRRRVRGIVSKAQRVSEETSMMAREMANEFEKSIGIQRDRVYEERNRILETSDFSAFDFDSLARDVFDYDLRTKHIHNKDDIINYIYEQLSFSFKDDAISQQIQTREQTIDYLVQQFNKQLKENMKIANNDYFKLRFFQKAILKAIDVEWINQVDQLQQLKASVNNRQNGQRNAIFEYHKVALETYEMMLINIKRATIRNLCLSILTFDKDQDLVVHFP.

ATP contacts are provided by residues Gln84, 102 to 106 (GEGKT), and Asp496.

The protein belongs to the SecA family. As to quaternary structure, monomer and homodimer. Part of the essential Sec protein translocation apparatus which comprises SecA, SecYEG and auxiliary proteins SecDF. Other proteins may also be involved.

The protein resides in the cell membrane. The protein localises to the cytoplasm. The catalysed reaction is ATP + H2O + cellular proteinSide 1 = ADP + phosphate + cellular proteinSide 2.. Its function is as follows. Part of the Sec protein translocase complex. Interacts with the SecYEG preprotein conducting channel. Has a central role in coupling the hydrolysis of ATP to the transfer of proteins into and across the cell membrane, serving as an ATP-driven molecular motor driving the stepwise translocation of polypeptide chains across the membrane. This Staphylococcus haemolyticus (strain JCSC1435) protein is Protein translocase subunit SecA 2.